Consider the following 333-residue polypeptide: Transcription factor HHO6 (333 aa).

The HTH myb-type domain maps to 189–249; sequence ALRKQRRCWN…HLQKYRLHIR (61 aa). Positions 220 to 245 form a DNA-binding region, H-T-H motif; it reads PKQIREHMQEEGLTNDEVKSHLQKYR. The disordered stretch occupies residues 274–333; the sequence is DEEETCEGGESLKRSNAQSDSPQGPLQLPSTTTTTGGDSSMEDVEDAKSESFQLERLRSP. Residues 287 to 303 show a composition bias toward polar residues; sequence RSNAQSDSPQGPLQLPS. Over residues 319 to 333 the composition is skewed to basic and acidic residues; the sequence is DAKSESFQLERLRSP.

The protein localises to the nucleus. Probable transcription factor involved in phosphate signaling in roots. The protein is Transcription factor HHO6 of Arabidopsis thaliana (Mouse-ear cress).